A 175-amino-acid polypeptide reads, in one-letter code: Protein MODIFYING WALL LIGNIN-1 (175 aa).

Residues 1 to 24 form the signal peptide; the sequence is MFIFLFGLAAFFLCLSAEFQKAKA. At 25 to 52 the chain is on the cytoplasmic side; that stretch reads LLRAQVFLKGKDLKWDGESCYLPENRAF. The chain crosses the membrane as a helical span at residues 53-73; sequence GLGIAALVCVSVAQIVGNVVI. Over 74–86 the chain is Extracellular; the sequence is CRGFTKTDKTRTT. The helical transmembrane segment at 87–107 threads the bilayer; sequence IFCIILLLFSWVNFAVAVTLI. Residues 108 to 135 lie on the Cytoplasmic side of the membrane; the sequence is SVGASMNREQIYGKGWLNRECYLVKDGV. Residues 136-156 traverse the membrane as a helical segment; it reads FAASGFLSVTTMAAILGAFAF. At 157 to 175 the chain is on the extracellular side; that stretch reads KVKPSLQVENHDKRHTQNV.

Belongs to the DESIGUAL family. Interacts with CRK19.

The protein resides in the cell membrane. In terms of biological role, together with MWL2, contributes to secondary cell wall biology, specifically lignin biosynthesis. The polypeptide is Protein MODIFYING WALL LIGNIN-1 (Arabidopsis thaliana (Mouse-ear cress)).